We begin with the raw amino-acid sequence, 695 residues long: Elongation factor G (695 aa).

The 276-residue stretch at 5–280 (SHYRNIGIFA…AVIDFLPSPT (276 aa)) folds into the tr-type G domain. GTP-binding positions include 14 to 21 (AHVDAGKT), 78 to 82 (DTPGH), and 132 to 135 (NKLD). The tract at residues 279-299 (PTEVDPQPLTDEETGEPTGEV) is disordered.

This sequence belongs to the TRAFAC class translation factor GTPase superfamily. Classic translation factor GTPase family. EF-G/EF-2 subfamily.

It is found in the cytoplasm. In terms of biological role, catalyzes the GTP-dependent ribosomal translocation step during translation elongation. During this step, the ribosome changes from the pre-translocational (PRE) to the post-translocational (POST) state as the newly formed A-site-bound peptidyl-tRNA and P-site-bound deacylated tRNA move to the P and E sites, respectively. Catalyzes the coordinated movement of the two tRNA molecules, the mRNA and conformational changes in the ribosome. The chain is Elongation factor G from Alteromonas mediterranea (strain DSM 17117 / CIP 110805 / LMG 28347 / Deep ecotype).